The primary structure comprises 137 residues: Nucleoside diphosphate kinase (137 aa).

Positions 9, 57, 85, 91, 102, and 112 each coordinate ATP. His115 acts as the Pros-phosphohistidine intermediate in catalysis.

It belongs to the NDK family. Homotetramer. Mg(2+) serves as cofactor.

It is found in the cytoplasm. It carries out the reaction a 2'-deoxyribonucleoside 5'-diphosphate + ATP = a 2'-deoxyribonucleoside 5'-triphosphate + ADP. The catalysed reaction is a ribonucleoside 5'-diphosphate + ATP = a ribonucleoside 5'-triphosphate + ADP. Its function is as follows. Major role in the synthesis of nucleoside triphosphates other than ATP. The ATP gamma phosphate is transferred to the NDP beta phosphate via a ping-pong mechanism, using a phosphorylated active-site intermediate. In Geobacter sp. (strain M21), this protein is Nucleoside diphosphate kinase.